We begin with the raw amino-acid sequence, 261 residues long: MAIPTFTMRQLLEAGVHFGHHTRRWNPKMAPYLFGVRNGVHIIDLEQSVPMMYRAMQAVRDVVAGGGRVLFVGTKRAAQEKVAESAKRCGQYYVNHRWLGGMLTNWKTISQSIRRLKEMDEQLAVGEQSGRTKKELLNMTREREKLERALGGIRDMGGLPDLLFIIDTNKESLAIQEANKLGIPVVAVVDSNSDPDGVTFPVPGNDDALRAIDTYCELIAGAVLDGLQAEMSAAGIDLGAAEEAPEEVLPAEGAEQAPAQA.

The protein belongs to the universal ribosomal protein uS2 family.

This chain is Small ribosomal subunit protein uS2, found in Rhodospirillum centenum (strain ATCC 51521 / SW).